Consider the following 389-residue polypeptide: 1-acyl-sn-glycerol-3-phosphate acyltransferase 2 (389 aa).

Residues 2-22 traverse the membrane as a helical segment; the sequence is VIAAAVIVPLGLLFFISGLAV. Positions 91–96 match the HXXXXD motif motif; sequence HRSDID. Helical transmembrane passes span 305–325 and 333–353; these read LAVV…FLHW and KGIT…QILI. The tract at residues 357–389 is disordered; sequence QSERSTPAKVVPAKPKDNHHPESSSQTETEKEK. Residues 370-389 show a composition bias toward basic and acidic residues; the sequence is KPKDNHHPESSSQTETEKEK.

Belongs to the 1-acyl-sn-glycerol-3-phosphate acyltransferase family. As to quaternary structure, interacts with GPAT9 and DGAT1. As to expression, present in roots, leaves, stems, floral buds and siliques (at protein level). Widely expressed. In contrast to LPAT1, it is not expressed at higher level in leaves.

It is found in the endoplasmic reticulum membrane. It catalyses the reaction a 1-acyl-sn-glycero-3-phosphate + an acyl-CoA = a 1,2-diacyl-sn-glycero-3-phosphate + CoA. The protein operates within phospholipid metabolism; CDP-diacylglycerol biosynthesis; CDP-diacylglycerol from sn-glycerol 3-phosphate: step 2/3. Converts lysophosphatidic acid (LPA) into phosphatidic acid by incorporating acyl moiety at the 2 position. Has preference for C-18-CoA substrates compared to C-16-CoA substrates. Required for female but not male gametophyte development. The polypeptide is 1-acyl-sn-glycerol-3-phosphate acyltransferase 2 (LPAT2) (Arabidopsis thaliana (Mouse-ear cress)).